The chain runs to 226 residues: AN1-type zinc finger protein 3 homolog (226 aa).

The A20-type zinc finger occupies 12–44 (PSLPPRCPCGFWGSSKTMNLCSKCFADFQKKQP). The Zn(2+) site is built by Cys-18, Cys-20, Cys-32, and Cys-35. Positions 42-149 (KQPDEDTAPS…DRPDNSSRSK (108 aa)) are disordered. Polar residues-rich tracts occupy residues 49–59 (APSTSSSQSDL), 67–92 (DNGN…NVDS), and 105–114 (AHVSLTTPSK). The span at 134–146 (RLLDSGDRPDNSS) shows a compositional bias: basic and acidic residues. The AN1-type zinc finger occupies 150 to 199 (QKSRRRCFRCQIKLELVQQELGSCRCGYVFCMLHRLPEQHDCTFDHMGRG). Positions 156, 159, 173, 175, 180, 183, 189, and 191 each coordinate Zn(2+).

In Xenopus laevis (African clawed frog), this protein is AN1-type zinc finger protein 3 homolog (zfand3).